The primary structure comprises 277 residues: Trypsin-2 (277 aa).

The first 19 residues, Met1 to Cys19, serve as a signal peptide directing secretion. A propeptide spans Ala20–Arg50 (activation peptide). The Peptidase S1 domain occupies Val51 to Gly276. Residues Cys76 and Cys92 are joined by a disulfide bond. Catalysis depends on charge relay system residues His91 and Asp136. Intrachain disulfides connect Cys201-Cys217 and Cys228-Cys252. Ser232 (charge relay system) is an active-site residue.

The protein belongs to the peptidase S1 family. As to expression, midgut.

It is found in the secreted. It carries out the reaction Preferential cleavage: Arg-|-Xaa, Lys-|-Xaa.. Functionally, major function may be to aid in digestion of the blood meal. In Anopheles gambiae (African malaria mosquito), this protein is Trypsin-2 (TRYP2).